The following is a 568-amino-acid chain: Glycine--tRNA ligase (568 aa).

Arg-97 and Glu-163 together coordinate substrate. Residues 195–197, 205–210, 322–323, and 441–444 each bind ATP; these read RNE, IRLREF, EC, and GIDR. Residue 210–214 participates in substrate binding; that stretch reads FTQAE. 437-441 provides a ligand contact to substrate; sequence EPSFG.

It belongs to the class-II aminoacyl-tRNA synthetase family.

It localises to the cytoplasm. It carries out the reaction tRNA(Gly) + glycine + ATP = glycyl-tRNA(Gly) + AMP + diphosphate. Its function is as follows. Catalyzes the attachment of glycine to tRNA(Gly). In Pyrococcus furiosus (strain ATCC 43587 / DSM 3638 / JCM 8422 / Vc1), this protein is Glycine--tRNA ligase.